A 160-amino-acid chain; its full sequence is Cyclic pyranopterin monophosphate synthase (160 aa).

Substrate-binding positions include 74-76 (LSH) and 112-113 (ME). Residue Asp127 is part of the active site.

Belongs to the MoaC family. As to quaternary structure, homohexamer; trimer of dimers.

It carries out the reaction (8S)-3',8-cyclo-7,8-dihydroguanosine 5'-triphosphate = cyclic pyranopterin phosphate + diphosphate. It participates in cofactor biosynthesis; molybdopterin biosynthesis. Catalyzes the conversion of (8S)-3',8-cyclo-7,8-dihydroguanosine 5'-triphosphate to cyclic pyranopterin monophosphate (cPMP). In Geotalea uraniireducens (strain Rf4) (Geobacter uraniireducens), this protein is Cyclic pyranopterin monophosphate synthase.